Reading from the N-terminus, the 435-residue chain is Cyclin-dependent kinase 15 (435 aa).

The Protein kinase domain maps to 103 to 387 (YLNLEKLGEG…AQEALVHDYF (285 aa)). ATP-binding positions include 109 to 117 (LGEGSYATV) and Lys132. The Proton acceptor role is filled by Asp224.

Belongs to the protein kinase superfamily. CMGC Ser/Thr protein kinase family. CDC2/CDKX subfamily. It depends on Mg(2+) as a cofactor.

It catalyses the reaction L-seryl-[protein] + ATP = O-phospho-L-seryl-[protein] + ADP + H(+). It carries out the reaction L-threonyl-[protein] + ATP = O-phospho-L-threonyl-[protein] + ADP + H(+). Its function is as follows. Serine/threonine-protein kinase that acts like an antiapoptotic protein that counters TRAIL/TNFSF10-induced apoptosis by inducing phosphorylation of BIRC5 at 'Thr-34'. The chain is Cyclin-dependent kinase 15 (CDK15) from Homo sapiens (Human).